Consider the following 151-residue polypeptide: uncharacterized protein (151 aa).

This is an uncharacterized protein from Archaeoglobus fulgidus (strain ATCC 49558 / DSM 4304 / JCM 9628 / NBRC 100126 / VC-16).